The sequence spans 716 residues: Polyribonucleotide nucleotidyltransferase (716 aa).

Mg(2+) contacts are provided by D480 and D486. Positions 547–606 constitute a KH domain; that stretch reads PKIVQLQIDIDKISLVIGSTGKTVKAITDEFEVKVQIEQNGKIILFGDDDFKMQKAKERI. One can recognise an S1 motif domain in the interval 616 to 711; sequence GEIYEGTVKK…KFGKIDLEIV (96 aa).

It belongs to the polyribonucleotide nucleotidyltransferase family. It depends on Mg(2+) as a cofactor.

The protein localises to the cytoplasm. It carries out the reaction RNA(n+1) + phosphate = RNA(n) + a ribonucleoside 5'-diphosphate. In terms of biological role, involved in mRNA degradation. Catalyzes the phosphorolysis of single-stranded polyribonucleotides processively in the 3'- to 5'-direction. The protein is Polyribonucleotide nucleotidyltransferase of Borreliella burgdorferi (strain ATCC 35210 / DSM 4680 / CIP 102532 / B31) (Borrelia burgdorferi).